A 454-amino-acid chain; its full sequence is GA-binding protein alpha chain (454 aa).

Positions Ala-168–Val-251 constitute a PNT domain. The segment at Gln-297–Asn-316 is disordered. Ser-303 carries the phosphoserine modification. Positions Ile-320–Val-400 form a DNA-binding region, ETS.

The protein belongs to the ETS family. As to quaternary structure, heterotetramer of two alpha and two beta subunits.

The protein localises to the nucleus. Its function is as follows. Transcription factor capable of interacting with purine rich repeats (GA repeats). Positively regulates transcription of transcriptional repressor RHIT/ZNF205. Functionally, (Microbial infection) Necessary for the expression of the Adenovirus E4 gene. The protein is GA-binding protein alpha chain (GABPA) of Homo sapiens (Human).